Reading from the N-terminus, the 563-residue chain is Solute carrier family 22 member 6 (563 aa).

The Cytoplasmic segment spans residues Met1 to Gln9. A helical transmembrane segment spans residues Val10–Leu30. Over Met31–Gln135 the chain is Extracellular. Residues Asn39, Asn56, Asn92, Asn97, and Asn113 are each glycosylated (N-linked (GlcNAc...) asparagine). A helical membrane pass occupies residues Leu136 to Ala156. The Cytoplasmic portion of the chain corresponds to Asp157–Val164. The chain crosses the membrane as a helical span at residues Leu165–Ile187. Topologically, residues Tyr188–Ala190 are extracellular. A helical transmembrane segment spans residues Phe191–Trp213. At Met214–Thr224 the chain is on the cytoplasmic side. A helical transmembrane segment spans residues Leu225–Pro245. Residues His246–Arg248 lie on the Extracellular side of the membrane. Residues His249–Ile269 traverse the membrane as a helical segment. Topologically, residues Glu270–His337 are cytoplasmic. A helical membrane pass occupies residues Leu338–Met358. Over Asp359–Tyr368 the chain is Extracellular. Residues Leu369 to Ile389 form a helical membrane-spanning segment. Over Asn390–Arg395 the chain is Cytoplasmic. Residues Pro396 to Pro416 traverse the membrane as a helical segment. Residues Gln417–Ser425 are Extracellular-facing. The chain crosses the membrane as a helical span at residues Leu426–Gly446. The Cytoplasmic portion of the chain corresponds to Glu447–Gln455. The chain crosses the membrane as a helical span at residues Thr456–Val475. The Extracellular portion of the chain corresponds to Ser476–Ser484. Residues Met485–Pro505 traverse the membrane as a helical segment. At Glu506–Leu563 the chain is on the cytoplasmic side. The tract at residues Pro525 to Leu563 is disordered.

It belongs to the major facilitator (TC 2.A.1) superfamily. Organic cation transporter (TC 2.A.1.19) family. In terms of processing, glycosylated. Glycosylation at Asn-113 may occur at a secondary level. Glycosylation is necessary for proper targeting of the transporter to the plasma membrane. As to expression, strongly expressed in kidney. Expressed at lower level in liver, skeletal muscle, brain and placenta. In kidney, found at the basolateral membrane of the proximal tubule. In testis, primarily localized to the basal membrane of Sertoli cells and weakly expressed in Leydig cells and vascular endothelial cells.

It localises to the basolateral cell membrane. It is found in the basal cell membrane. The catalysed reaction is (6R)-L-erythro-5,6,7,8-tetrahydrobiopterin(out) + a dicarboxylate(in) = (6R)-L-erythro-5,6,7,8-tetrahydrobiopterin(in) + a dicarboxylate(out). It catalyses the reaction L-erythro-7,8-dihydrobiopterin(out) + a dicarboxylate(in) = L-erythro-7,8-dihydrobiopterin(in) + a dicarboxylate(out). It carries out the reaction L-sepiapterin(out) + a dicarboxylate(in) = L-sepiapterin(in) + a dicarboxylate(out). The enzyme catalyses prostaglandin F2alpha(out) + a dicarboxylate(in) = prostaglandin F2alpha(in) + a dicarboxylate(out). The catalysed reaction is prostaglandin E2(out) + a dicarboxylate(in) = prostaglandin E2(in) + a dicarboxylate(out). It catalyses the reaction 3',5'-cyclic AMP(out) + a dicarboxylate(in) = 3',5'-cyclic AMP(in) + a dicarboxylate(out). It carries out the reaction 3',5'-cyclic GMP(out) + a dicarboxylate(in) = 3',5'-cyclic GMP(in) + a dicarboxylate(out). The enzyme catalyses urate(out) + a dicarboxylate(in) = urate(in) + a dicarboxylate(out). The catalysed reaction is kynurenate(out) + glutarate(in) = kynurenate(in) + glutarate(out). It catalyses the reaction (indol-3-yl)acetate(out) + a dicarboxylate(in) = (indol-3-yl)acetate(in) + a dicarboxylate(out). It carries out the reaction indoxyl sulfate(out) + a dicarboxylate(in) = indoxyl sulfate(in) + a dicarboxylate(out). The enzyme catalyses N-benzoylglycine(out) + a dicarboxylate(in) = N-benzoylglycine(in) + a dicarboxylate(out). The catalysed reaction is 3-carboxy-4-methyl-5-propyl-2-furanpropanoate(out) + a dicarboxylate(in) = 3-carboxy-4-methyl-5-propyl-2-furanpropanoate(in) + a dicarboxylate(out). In terms of biological role, secondary active transporter that functions as a Na(+)-independent organic anion (OA)/dicarboxylate antiporter where the uptake of one molecule of OA into the cell is coupled with an efflux of one molecule of intracellular dicarboxylate such as 2-oxoglutarate or glutarate. Mediates the uptake of OA across the basolateral side of proximal tubule epithelial cells, thereby contributing to the renal elimination of endogenous OA from the systemic circulation into the urine. Functions as a biopterin transporters involved in the uptake and the secretion of coenzymes tetrahydrobiopterin (BH4), dihydrobiopterin (BH2) and sepiapterin to urine, thereby determining baseline levels of blood biopterins. Transports prostaglandin E2 (PGE2) and prostaglandin F2-alpha (PGF2-alpha) and may contribute to their renal excretion. Also mediates the uptake of cyclic nucleotides such as cAMP and cGMP. Involved in the transport of neuroactive tryptophan metabolites kynurenate (KYNA) and xanthurenate (XA) and may contribute to their secretion from the brain. May transport glutamate. Also involved in the disposition of uremic toxins and potentially toxic xenobiotics by the renal organic anion secretory pathway, helping reduce their undesired toxicological effects on the body. Uremic toxins include the indoxyl sulfate (IS), hippurate/N-benzoylglycine (HA), indole acetate (IA), 3-carboxy-4- methyl-5-propyl-2-furanpropionate (CMPF) and urate. Xenobiotics include the mycotoxin ochratoxin (OTA). May also contribute to the transport of organic compounds in testes across the blood-testis-barrier. The polypeptide is Solute carrier family 22 member 6 (Homo sapiens (Human)).